A 61-amino-acid polypeptide reads, in one-letter code: Large ribosomal subunit protein uL30 (61 aa).

Belongs to the universal ribosomal protein uL30 family. In terms of assembly, part of the 50S ribosomal subunit.

The chain is Large ribosomal subunit protein uL30 from Legionella pneumophila (strain Paris).